Here is a 573-residue protein sequence, read N- to C-terminus: Formate--tetrahydrofolate ligase 3 (573 aa).

Thr-66–Thr-73 is a binding site for ATP.

Belongs to the formate--tetrahydrofolate ligase family.

It catalyses the reaction (6S)-5,6,7,8-tetrahydrofolate + formate + ATP = (6R)-10-formyltetrahydrofolate + ADP + phosphate. It participates in one-carbon metabolism; tetrahydrofolate interconversion. In Rubrobacter xylanophilus (strain DSM 9941 / JCM 11954 / NBRC 16129 / PRD-1), this protein is Formate--tetrahydrofolate ligase 3.